Consider the following 428-residue polypeptide: Elongation factor 1-alpha (428 aa).

A tr-type G domain is found at Lys-5 to Lys-215. The G1 stretch occupies residues Gly-14–Ser-21. A GTP-binding site is contributed by Gly-14–Ser-21. Ser-21 lines the Mg(2+) pocket. The segment at Gly-68–Asp-72 is G2. A G3 region spans residues Asp-89–Gly-92. GTP is bound by residues Asp-89–His-93 and Asn-144–Asp-147. The segment at Asn-144–Asp-147 is G4. The interval Ser-181–Trp-183 is G5.

The protein belongs to the TRAFAC class translation factor GTPase superfamily. Classic translation factor GTPase family. EF-Tu/EF-1A subfamily.

It localises to the cytoplasm. It catalyses the reaction GTP + H2O = GDP + phosphate + H(+). Functionally, GTP hydrolase that promotes the GTP-dependent binding of aminoacyl-tRNA to the A-site of ribosomes during protein biosynthesis. The sequence is that of Elongation factor 1-alpha from Thermococcus gammatolerans (strain DSM 15229 / JCM 11827 / EJ3).